Reading from the N-terminus, the 67-residue chain is Large ribosomal subunit protein uL30 (67 aa).

This sequence belongs to the universal ribosomal protein uL30 family. As to quaternary structure, part of the 50S ribosomal subunit.

In Hamiltonella defensa subsp. Acyrthosiphon pisum (strain 5AT), this protein is Large ribosomal subunit protein uL30.